A 541-amino-acid polypeptide reads, in one-letter code: Transmembrane protein 87A (541 aa).

The signal sequence occupies residues M1 to A26. Residues V27 to P209 are Lumenal-facing. Residues N52, N109, N148, and N189 are each glycosylated (N-linked (GlcNAc...) asparagine). Disulfide bonds link C65-C116 and C82-C416. Residues L210–I230 traverse the membrane as a helical segment. Residues W231–R241 are Cytoplasmic-facing. Residues I242–A262 traverse the membrane as a helical segment. At E263–R293 the chain is on the lumenal side. The helical transmembrane segment at L294–M314 threads the bilayer. Residues H315–R316 are Cytoplasmic-facing. Residues V317 to I337 traverse the membrane as a helical segment. At G338 to L344 the chain is on the lumenal side. Residues V345–V365 traverse the membrane as a helical segment. Residues S366–S384 are Cytoplasmic-facing. A helical transmembrane segment spans residues L385–I405. At W406–E422 the chain is on the lumenal side. Residues L423 to F443 traverse the membrane as a helical segment. The Cytoplasmic segment spans residues L444–E541.

This sequence belongs to the LU7TM family. TMEM87 subfamily.

It is found in the cell membrane. It localises to the golgi apparatus membrane. Potential monoatomic ion channel gated by mechanical force, implicated in normal touch sensitivity through the generation of mechanically activated currents. However, a direct channel activity is debated and an alternative could be that it functions as a chaperone for an unidentified mechanosensitive ion channel. Could also be involved in cell mechanosensitivity regulating cell adhesion and migration. May also be involved in retrograde transport from endosomes to the trans-Golgi network (TGN). In Xenopus tropicalis (Western clawed frog), this protein is Transmembrane protein 87A.